Reading from the N-terminus, the 611-residue chain is Glutamine--fructose-6-phosphate aminotransferase [isomerizing] (611 aa).

The active-site Nucleophile; for GATase activity is C2. The Glutamine amidotransferase type-2 domain maps to 2–219; the sequence is CGIVGGVSKT…DGDVAMLQRQ (218 aa). 2 consecutive SIS domains span residues 287–427 and 460–601; these read AAAM…APGA and WAAR…VDRP. The For Fru-6P isomerization activity role is filled by K606.

Homodimer.

The protein resides in the cytoplasm. It catalyses the reaction D-fructose 6-phosphate + L-glutamine = D-glucosamine 6-phosphate + L-glutamate. Its function is as follows. Catalyzes the first step in hexosamine metabolism, converting fructose-6P into glucosamine-6P using glutamine as a nitrogen source. The chain is Glutamine--fructose-6-phosphate aminotransferase [isomerizing] from Acidithiobacillus ferridurans.